A 318-amino-acid chain; its full sequence is Oxygen-evolving enhancer protein 1, chloroplastic (318 aa).

The first 18 residues, 1–18 (MKAVIAVFITLMLTAVVA), serve as a signal peptide directing secretion. Residues 45 to 65 (AAAAALAALTTLSVISPSFAI) form a helical membrane-spanning segment.

Belongs to the PsbO family.

Its subcellular location is the plastid. It is found in the chloroplast thylakoid membrane. Stabilizes the manganese cluster which is the primary site of water splitting. In Chattonella marina var. antiqua (Red tide flagellate), this protein is Oxygen-evolving enhancer protein 1, chloroplastic.